The primary structure comprises 412 residues: Protein MT3510 (412 aa).

Lys227 is subject to N6-(pyridoxal phosphate)lysine.

The protein belongs to the DegT/DnrJ/EryC1 family.

This Mycobacterium tuberculosis (strain CDC 1551 / Oshkosh) protein is Protein MT3510.